A 160-amino-acid polypeptide reads, in one-letter code: NADH-quinone oxidoreductase subunit B (160 aa).

[4Fe-4S] cluster contacts are provided by cysteine 39, cysteine 40, cysteine 104, and cysteine 135.

It belongs to the complex I 20 kDa subunit family. As to quaternary structure, NDH-1 is composed of 14 different subunits. Subunits NuoB, C, D, E, F, and G constitute the peripheral sector of the complex. It depends on [4Fe-4S] cluster as a cofactor.

The protein localises to the cell membrane. It carries out the reaction a quinone + NADH + 5 H(+)(in) = a quinol + NAD(+) + 4 H(+)(out). Functionally, NDH-1 shuttles electrons from NADH, via FMN and iron-sulfur (Fe-S) centers, to quinones in the respiratory chain. The immediate electron acceptor for the enzyme in this species is believed to be a menaquinone. Couples the redox reaction to proton translocation (for every two electrons transferred, four hydrogen ions are translocated across the cytoplasmic membrane), and thus conserves the redox energy in a proton gradient. The polypeptide is NADH-quinone oxidoreductase subunit B (Amoebophilus asiaticus (strain 5a2)).